Consider the following 622-residue polypeptide: MARLVHLTAVLAASIRLAAAATINHDFNVTWVRANPDGAFERPVIGINGKWPIPTIECNLGDRIVINLNNQLGNQSTSLHFHGLFQNGTNHMDGPSGVTQCAVPPGSSVTYNFTVDQPGTYWYHSHNDGQYPDGLRGPLVVHDPEFPYKKEVDEEIVLTLSDWYHDEIQTLIPQFLSKTNPTGAEPVPNACLINDTQNITVSVQPGKTYHVRVINIGAFAGQYLWFEGHKMRIVEVDGVYTKDAEADMIYITAAQRVSFLLTTRNDTNANFPFMASMDKALFDKLPADLNYNSTGWLSYDKSKSYPDPALVDELNPFDDMTLEAYDGMELLPEPDQNVALDVIMKNLGDGVNYAFFGNITYKSPKVPTLYSVLSSGDKATDPAIYGEHTHPFVLKKNEIVQIVVNNLDEGRHPFHLHGHNFQAIYRSNESAGTWEDGGGAAGKTFPKVPMRRDTLLIYPNGNMVLRFKANNPGVWLFHCHIEWHVISGLVATFVEAPMDLQKSLAIPTDHLDACKAGNIPTEGNAAGNTKDLLDLSGQNTPPDPLPAGFTTRGIVALVFSCVTGILGICVVAWYGMSQPLEEATAAVATLVREAQVTGSGTSPNHDDGNAAATEAGVLRRRT.

Residues 1–20 (MARLVHLTAVLAASIRLAAA) form the signal peptide. At 21–552 (ATINHDFNVT…DPLPAGFTTR (532 aa)) the chain is on the extracellular side. 2 N-linked (GlcNAc...) asparagine glycosylation sites follow: asparagine 28 and asparagine 74. Plastocyanin-like domains follow at residues 29 to 144 (VTWV…VHDP) and 154 to 301 (EEIV…SYDK). Positions 80 and 82 each coordinate Cu cation. 2 N-linked (GlcNAc...) asparagine glycosylation sites follow: asparagine 87 and asparagine 112. Residues histidine 124 and histidine 126 each coordinate Cu cation. 5 N-linked (GlcNAc...) asparagine glycosylation sites follow: asparagine 194, asparagine 198, asparagine 265, asparagine 292, and asparagine 358. The 136-residue stretch at 362 to 497 (KSPKVPTLYS…GLVATFVEAP (136 aa)) folds into the Plastocyanin-like 3 domain. The Cu cation site is built by histidine 412, histidine 415, and histidine 417. A glycan (N-linked (GlcNAc...) asparagine) is linked at asparagine 428. Cu cation-binding residues include histidine 478, cysteine 479, histidine 480, and histidine 484. A helical transmembrane segment spans residues 553–573 (GIVALVFSCVTGILGICVVAW). Over 574-622 (YGMSQPLEEATAAVATLVREAQVTGSGTSPNHDDGNAAATEAGVLRRRT) the chain is Cytoplasmic. Residues 597 to 622 (TGSGTSPNHDDGNAAATEAGVLRRRT) are disordered.

This sequence belongs to the multicopper oxidase family.

Its subcellular location is the cell membrane. Functionally, cell surface ferroxidase; part of the reductive iron assimilatory system (RIA), a siderophore-independent high affinity iron uptake mechanism. Required to oxidize Fe(2+) and release it from the transporter. This chain is Iron transport multicopper oxidase fetC, found in Epichloe festucae (strain E2368).